A 415-amino-acid polypeptide reads, in one-letter code: Gamma-glutamyl phosphate reductase (415 aa).

This sequence belongs to the gamma-glutamyl phosphate reductase family.

It localises to the cytoplasm. It carries out the reaction L-glutamate 5-semialdehyde + phosphate + NADP(+) = L-glutamyl 5-phosphate + NADPH + H(+). It participates in amino-acid biosynthesis; L-proline biosynthesis; L-glutamate 5-semialdehyde from L-glutamate: step 2/2. Its function is as follows. Catalyzes the NADPH-dependent reduction of L-glutamate 5-phosphate into L-glutamate 5-semialdehyde and phosphate. The product spontaneously undergoes cyclization to form 1-pyrroline-5-carboxylate. The protein is Gamma-glutamyl phosphate reductase of Listeria innocua serovar 6a (strain ATCC BAA-680 / CLIP 11262).